Reading from the N-terminus, the 364-residue chain is MSVMVVRKKVTRKWEKLPGRNTFCCDGRVMMARQKGIFYLTLFLILGTCTLFFAFECRYLAVQQSPAIPVFAAMLFLFSMATLLRASFSDPGVIPRALPDEAAFIEMEIEATNGAVPQGQRPPPRIKNSQINNQIVKLKYCYTCKIFRPPRASHCSICDNCVERFDHHCPWVGNCVGKRNYRYFYLFILSLSLLTIYVFAFNIVYVALKSLKIGFLETLKETPGTVLEVLICFFTLWSVVGLTGFHTFLVALNQTTNEDIKGSWTGKNRVQNPYSHGNIVKNCCEVLCGPLPPSVLDRRGILPLEESGSRPPSTQETSSSLLPQSPAPTEHLNSNEMPDDSSTPEEMPPPEPPEPPQEAAEAEK.

Residues 1–35 (MSVMVVRKKVTRKWEKLPGRNTFCCDGRVMMARQK) are Cytoplasmic-facing. The helical transmembrane segment at 36–56 (GIFYLTLFLILGTCTLFFAFE) threads the bilayer. The Lumenal segment spans residues 57-63 (CRYLAVQ). The helical transmembrane segment at 64 to 84 (QSPAIPVFAAMLFLFSMATLL) threads the bilayer. At 85-183 (RASFSDPGVI…NCVGKRNYRY (99 aa)) the chain is on the cytoplasmic side. In terms of domain architecture, DHHC spans 139–189 (KYCYTCKIFRPPRASHCSICDNCVERFDHHCPWVGNCVGKRNYRYFYLFIL). The active-site S-palmitoyl cysteine intermediate is the Cys-169. The helical transmembrane segment at 184–204 (FYLFILSLSLLTIYVFAFNIV) threads the bilayer. Residues 205–228 (YVALKSLKIGFLETLKETPGTVLE) are Lumenal-facing. The chain crosses the membrane as a helical span at residues 229–249 (VLICFFTLWSVVGLTGFHTFL). Residues 250–364 (VALNQTTNED…PPQEAAEAEK (115 aa)) are Cytoplasmic-facing. The tract at residues 303–364 (PLEESGSRPP…PPQEAAEAEK (62 aa)) is disordered. A compositionally biased stretch (polar residues) spans 310–323 (RPPSTQETSSSLLP). A compositionally biased stretch (pro residues) spans 346–356 (EMPPPEPPEPP).

This sequence belongs to the DHHC palmitoyltransferase family. ERF2/ZDHHC9 subfamily. As to quaternary structure, interacts with GOLGA7.

It is found in the endoplasmic reticulum membrane. The protein resides in the golgi apparatus membrane. It catalyses the reaction L-cysteinyl-[protein] + hexadecanoyl-CoA = S-hexadecanoyl-L-cysteinyl-[protein] + CoA. Palmitoyltransferase that catalyzes the addition of palmitate onto various protein substrates, such as ADRB2, GSDMD, HRAS, NRAS and CGAS. The ZDHHC9-GOLGA7 complex is a palmitoyltransferase specific for HRAS and NRAS. May have a palmitoyltransferase activity toward the beta-2 adrenergic receptor/ADRB2 and therefore regulate G protein-coupled receptor signaling. Acts as a regulator of innate immunity by catalyzing palmitoylation of CGAS, thereby promoting CGAS homodimerization and cyclic GMP-AMP synthase activity. Activates pyroptosis by catalyzing palmitoylation of gasdermin-D (GSDMD), thereby promoting membrane translocation and pore formation of GSDMD. The sequence is that of Palmitoyltransferase ZDHHC9 (ZDHHC9) from Pongo abelii (Sumatran orangutan).